A 1040-amino-acid chain; its full sequence is Multidrug resistance protein MdtB (1040 aa).

The next 12 helical transmembrane spans lie at 16-36 (FIMRPVATTLLMVAILLAGII), 347-367 (LMMAIALVVMIIYLFLRNIPA), 369-389 (IIPGFAVPLSLIGTFAVMVFL), 396-416 (LTLMALTIATGFVVDDAIVVI), 440-460 (IGFTIISLTFSLIAVLIPLLF), 472-492 (FAITLAVAILISAVVSLTLTP), 537-557 (WLTLSVALSTLLLSVLLWVFI), 863-883 (LGSTVWLIVAAVVAMYIVLGI), 888-908 (FIHPITILSTLPTAGVGALLA), 911-931 (IAGSELDVIAIIGIILLIGIV), 968-988 (ILMTTLAALLGALPLMLSTGV), and 998-1018 (IGMVGGLIVSQVLTLFTTPVI).

This sequence belongs to the resistance-nodulation-cell division (RND) (TC 2.A.6) family. MdtB subfamily. As to quaternary structure, part of a tripartite efflux system composed of MdtA, MdtB and MdtC. MdtB forms a heteromultimer with MdtC.

The protein resides in the cell inner membrane. Its function is as follows. The MdtABC tripartite complex confers resistance against novobiocin and deoxycholate. The polypeptide is Multidrug resistance protein MdtB (Escherichia coli O8 (strain IAI1)).